A 117-amino-acid chain; its full sequence is Large ribosomal subunit protein bL17 (117 aa).

The protein belongs to the bacterial ribosomal protein bL17 family. In terms of assembly, part of the 50S ribosomal subunit. Contacts protein L32.

The chain is Large ribosomal subunit protein bL17 from Coprothermobacter proteolyticus (strain ATCC 35245 / DSM 5265 / OCM 4 / BT).